Reading from the N-terminus, the 163-residue chain is Phosphopantetheine adenylyltransferase (163 aa).

A substrate-binding site is contributed by Ser-10. ATP-binding positions include 10 to 11 (SF) and His-18. Lys-42, Leu-78, and Lys-92 together coordinate substrate. ATP-binding positions include 93 to 95 (GVR), Glu-103, and 127 to 133 (HAHVSSS).

It belongs to the bacterial CoaD family. In terms of assembly, homohexamer. It depends on Mg(2+) as a cofactor.

The protein resides in the cytoplasm. The enzyme catalyses (R)-4'-phosphopantetheine + ATP + H(+) = 3'-dephospho-CoA + diphosphate. It participates in cofactor biosynthesis; coenzyme A biosynthesis; CoA from (R)-pantothenate: step 4/5. Functionally, reversibly transfers an adenylyl group from ATP to 4'-phosphopantetheine, yielding dephospho-CoA (dPCoA) and pyrophosphate. The protein is Phosphopantetheine adenylyltransferase of Clavibacter michiganensis subsp. michiganensis (strain NCPPB 382).